The chain runs to 131 residues: Ribosome-binding factor A (131 aa).

The protein belongs to the RbfA family. In terms of assembly, monomer. Binds 30S ribosomal subunits, but not 50S ribosomal subunits or 70S ribosomes.

It is found in the cytoplasm. One of several proteins that assist in the late maturation steps of the functional core of the 30S ribosomal subunit. Associates with free 30S ribosomal subunits (but not with 30S subunits that are part of 70S ribosomes or polysomes). Required for efficient processing of 16S rRNA. May interact with the 5'-terminal helix region of 16S rRNA. The sequence is that of Ribosome-binding factor A from Thermotoga maritima (strain ATCC 43589 / DSM 3109 / JCM 10099 / NBRC 100826 / MSB8).